The sequence spans 126 residues: Adenosine 5'-monophosphoramidase HINT1 (126 aa).

The residue at position 2 (Ala2) is an N-acetylalanine. Residues 18 to 126 (IFGKIIRKEI…GGRQMNWPPG (109 aa)) enclose the HIT domain. Lys21 and Lys30 each carry N6-acetyllysine. 43-44 (DI) is a binding site for AMP. Ser45 and Ser72 each carry phosphoserine. Residues Asn99, 105 to 107 (GQS), and 112 to 114 (HLH) each bind AMP. The Histidine triad motif signature appears at 110 to 114 (HVHLH). His112 acts as the Tele-AMP-histidine intermediate in catalysis.

It belongs to the HINT family. Homodimer. Interacts with CDK7. Interacts with RUVBL1 and RUVBL2 and is associated with the LEF1/TCF1-CTNNB1 complex and with a KAT5 histone acetyltransferase complex. Identified in a complex with MITF and CTNNB1. Interacts with CDC34 and RBX1, and is part of a SCF (SKP2-CUL1-F-box protein) E3 ubiquitin-protein ligase complex. Interacts with SUMO1, SUMO2 and RGS17. Interacts with the Ten-1 ICD form of TENM1. Interacts with CALM1; interaction increases in the presence of calcium ions. As to expression, widely expressed.

The protein resides in the cytoplasm. It localises to the nucleus. It carries out the reaction adenosine 5'-phosphoramidate + H2O = AMP + NH4(+). In terms of biological role, exhibits adenosine 5'-monophosphoramidase activity, hydrolyzing purine nucleotide phosphoramidates with a single phosphate group such as adenosine 5'monophosphoramidate (AMP-NH2) to yield AMP and NH2. Hydrolyzes adenosine 5'monophosphomorpholidate (AMP-morpholidate) and guanosine 5'monophosphomorpholidate (GMP-morpholidate). Hydrolyzes lysyl-AMP (AMP-N-epsilon-(N-alpha-acetyl lysine methyl ester)) generated by lysine tRNA ligase, as well as Met-AMP, His-AMP and Asp-AMP, lysyl-GMP (GMP-N-epsilon-(N-alpha-acetyl lysine methyl ester)) and AMP-N-alanine methyl ester. Can also convert adenosine 5'-O-phosphorothioate and guanosine 5'-O-phosphorothioate to the corresponding nucleoside 5'-O-phosphates with concomitant release of hydrogen sulfide. In addition, functions as a scaffolding protein that modulates transcriptional activation by the LEF1/TCF1-CTNNB1 complex and by the complex formed with MITF and CTNNB1. Modulates p53/TP53 levels and p53/TP53-mediated apoptosis. Modulates proteasomal degradation of target proteins by the SCF (SKP2-CUL1-F-box protein) E3 ubiquitin-protein ligase complex. Also exhibits SUMO-specific isopeptidase activity, deconjugating SUMO1 from RANGAP1 and RGS17. The sequence is that of Adenosine 5'-monophosphoramidase HINT1 (HINT1) from Bos taurus (Bovine).